The following is a 77-amino-acid chain: Defensin-B6 (77 aa).

An N-terminal signal peptide occupies residues 1–20 (MKTLFFLSVFIFLLLHLSPG). 3 disulfide bridges follow: C43–C70, C50–C64, and C54–C71.

It belongs to the beta-defensin family. In terms of tissue distribution, lowly expressed in spleen, kidney and lung.

The protein localises to the secreted. Its function is as follows. Has antimicrobial activity. The chain is Defensin-B6 from Ornithorhynchus anatinus (Duckbill platypus).